The primary structure comprises 520 residues: L-tyrosine:2-oxoglutarate aminotransferase amt1 (520 aa).

The protein belongs to the class-I pyridoxal-phosphate-dependent aminotransferase family. Pyridoxal 5'-phosphate is required as a cofactor.

It catalyses the reaction L-tyrosine + 2-oxoglutarate = 3-(4-hydroxyphenyl)pyruvate + L-glutamate. It functions in the pathway secondary metabolite biosynthesis. In terms of biological role, an L-tyrosine:2-oxoglutarate aminotransferase (probably amt1) and atromentin synthetase nps3 catalyze consecutive steps to turn over L-tyrosine into atromentin, which represents the generic precursor molecule for the entire terphenylquinone and pulvinic acid family of pigments, which are widely distributed secondary metabolites in homobasidiomycetes. The first step catalyzed by amt1 converts L-tyrosine in to 4-hydroxyphenylpyruvate (4-HPP). Adenylation of two 4-HPP monomers by the nps3 adenylation (A) domain, covalent tethering of the monomers as a thioester and oxoester onto the nps3 thiolation (T) and thioesterase (TE) domains, respectively, and symmetric C-C-bond formation between two monomers catalyzed by the nps3 TE domain leads to atromentin. Follow-up products of atromentin in S.lacrymans include atromentic acid, xerocomic acid, isoxerocomic acid and variegatic acid. This is L-tyrosine:2-oxoglutarate aminotransferase amt1 (amt1) from Serpula lacrymans var. lacrymans (strain S7.9) (Dry rot fungus).